A 227-amino-acid chain; its full sequence is 2-C-methyl-D-erythritol 4-phosphate cytidylyltransferase (227 aa).

Belongs to the IspD/TarI cytidylyltransferase family. IspD subfamily.

The enzyme catalyses 2-C-methyl-D-erythritol 4-phosphate + CTP + H(+) = 4-CDP-2-C-methyl-D-erythritol + diphosphate. It participates in isoprenoid biosynthesis; isopentenyl diphosphate biosynthesis via DXP pathway; isopentenyl diphosphate from 1-deoxy-D-xylulose 5-phosphate: step 2/6. In terms of biological role, catalyzes the formation of 4-diphosphocytidyl-2-C-methyl-D-erythritol from CTP and 2-C-methyl-D-erythritol 4-phosphate (MEP). This chain is 2-C-methyl-D-erythritol 4-phosphate cytidylyltransferase, found in Mycobacterium marinum (strain ATCC BAA-535 / M).